Consider the following 338-residue polypeptide: L-serine dehydratase (338 aa).

The residue at position 39 (Lys-39) is an N6-(pyridoxal phosphate)lysine.

The protein belongs to the serine/threonine dehydratase family. Pyridoxal 5'-phosphate is required as a cofactor.

It is found in the cytoplasm. It carries out the reaction L-serine = pyruvate + NH4(+). It participates in carbohydrate biosynthesis; gluconeogenesis. The protein is L-serine dehydratase (SDL1) of Saccharomyces cerevisiae (strain AWRI1631) (Baker's yeast).